Consider the following 346-residue polypeptide: Probable RNA methyltransferase PA1839 (346 aa).

Glu-91 (proton acceptor) is an active-site residue. Residues 94–320 (LLPRGGLCVS…TKVRNSAGQD (227 aa)) form the Radical SAM core domain. Cysteines 101 and 325 form a disulfide. The [4Fe-4S] cluster site is built by Cys-108, Cys-112, and Cys-115. S-adenosyl-L-methionine-binding positions include 153–154 (GE), Ser-183, 206–208 (SLH), and Asn-282. Cys-325 (S-methylcysteine intermediate) is an active-site residue.

The protein belongs to the radical SAM superfamily. RlmN family. Requires [4Fe-4S] cluster as cofactor.

Its subcellular location is the cytoplasm. In Pseudomonas aeruginosa (strain ATCC 15692 / DSM 22644 / CIP 104116 / JCM 14847 / LMG 12228 / 1C / PRS 101 / PAO1), this protein is Probable RNA methyltransferase PA1839.